A 181-amino-acid chain; its full sequence is Oligoribonuclease (181 aa).

Residues 8–171 enclose the Exonuclease domain; that stretch reads LIWIDLEMTG…DDIRESIAEL (164 aa). Tyr-129 is an active-site residue.

This sequence belongs to the oligoribonuclease family.

Its subcellular location is the cytoplasm. Functionally, 3'-to-5' exoribonuclease specific for small oligoribonucleotides. This is Oligoribonuclease from Vibrio vulnificus (strain CMCP6).